The following is a 396-amino-acid chain: Elongation factor Tu (396 aa).

One can recognise a tr-type G domain in the interval 10–206 (KPHCNIGTIG…AVDAYIPQPE (197 aa)). The tract at residues 19-26 (GHVDHGKT) is G1. 19–26 (GHVDHGKT) lines the GTP pocket. Residue T26 coordinates Mg(2+). The G2 stretch occupies residues 60-64 (GITIS). Residues 81–84 (DCPG) are G3. Residues 81-85 (DCPGH) and 136-139 (NKVD) each bind GTP. The G4 stretch occupies residues 136–139 (NKVD). The G5 stretch occupies residues 174–176 (SAL).

Belongs to the TRAFAC class translation factor GTPase superfamily. Classic translation factor GTPase family. EF-Tu/EF-1A subfamily. In terms of assembly, monomer.

The protein resides in the cytoplasm. The catalysed reaction is GTP + H2O = GDP + phosphate + H(+). In terms of biological role, GTP hydrolase that promotes the GTP-dependent binding of aminoacyl-tRNA to the A-site of ribosomes during protein biosynthesis. This is Elongation factor Tu from Gluconacetobacter diazotrophicus (strain ATCC 49037 / DSM 5601 / CCUG 37298 / CIP 103539 / LMG 7603 / PAl5).